The chain runs to 255 residues: Type III pantothenate kinase (255 aa).

An ATP-binding site is contributed by 6–13 (DVGNTNIV). Substrate is bound by residues Tyr-100 and 107–110 (GADR). The Proton acceptor role is filled by Asp-109. Asp-129 provides a ligand contact to K(+). Thr-132 lines the ATP pocket. Position 184 (Thr-184) interacts with substrate.

Belongs to the type III pantothenate kinase family. Homodimer. NH4(+) is required as a cofactor. It depends on K(+) as a cofactor.

It is found in the cytoplasm. The enzyme catalyses (R)-pantothenate + ATP = (R)-4'-phosphopantothenate + ADP + H(+). It participates in cofactor biosynthesis; coenzyme A biosynthesis; CoA from (R)-pantothenate: step 1/5. Catalyzes the phosphorylation of pantothenate (Pan), the first step in CoA biosynthesis. This Geobacter sulfurreducens (strain ATCC 51573 / DSM 12127 / PCA) protein is Type III pantothenate kinase.